Reading from the N-terminus, the 434-residue chain is Protein ENHANCED PSEUDOMONAS SUSCEPTIBILITY 1 (434 aa).

Catalysis depends on D376, which acts as the Proton acceptor.

Belongs to the plant acyltransferase family.

In terms of biological role, required for pathogen-induced salicylic acid (SA) accumulation and SA-mediated resistance to virulent and avirulent pathogens (e.g. P.syringae). The polypeptide is Protein ENHANCED PSEUDOMONAS SUSCEPTIBILITY 1 (Arabidopsis thaliana (Mouse-ear cress)).